The sequence spans 119 residues: Dihydroneopterin aldolase (119 aa).

Residues glutamate 21, tyrosine 53, and 72-73 each bind substrate; that span reads IE. The active-site Proton donor/acceptor is the lysine 99.

It belongs to the DHNA family.

It carries out the reaction 7,8-dihydroneopterin = 6-hydroxymethyl-7,8-dihydropterin + glycolaldehyde. It participates in cofactor biosynthesis; tetrahydrofolate biosynthesis; 2-amino-4-hydroxy-6-hydroxymethyl-7,8-dihydropteridine diphosphate from 7,8-dihydroneopterin triphosphate: step 3/4. Functionally, catalyzes the conversion of 7,8-dihydroneopterin to 6-hydroxymethyl-7,8-dihydropterin. This is Dihydroneopterin aldolase (folB) from Streptococcus pyogenes serotype M3 (strain ATCC BAA-595 / MGAS315).